A 131-amino-acid chain; its full sequence is MSREFKRSDRVAQELQKEIAVILQREVKDPRIGMVTVSDVEVSRDLAYAKIFVTFLFNNDDEAIKQGMKALEKAAPYIRSLVGKAMRLRIVPELRFEYDRSLVEGMRMSNLVTNVVRSDKERHIDEENGED.

The protein belongs to the RbfA family. As to quaternary structure, monomer. Binds 30S ribosomal subunits, but not 50S ribosomal subunits or 70S ribosomes.

The protein resides in the cytoplasm. One of several proteins that assist in the late maturation steps of the functional core of the 30S ribosomal subunit. Associates with free 30S ribosomal subunits (but not with 30S subunits that are part of 70S ribosomes or polysomes). Required for efficient processing of 16S rRNA. May interact with the 5'-terminal helix region of 16S rRNA. This chain is Ribosome-binding factor A, found in Mannheimia succiniciproducens (strain KCTC 0769BP / MBEL55E).